The primary structure comprises 264 residues: Phosphoribosylaminoimidazole-succinocarboxamide synthase 1 (264 aa).

The protein belongs to the SAICAR synthetase family.

The catalysed reaction is 5-amino-1-(5-phospho-D-ribosyl)imidazole-4-carboxylate + L-aspartate + ATP = (2S)-2-[5-amino-1-(5-phospho-beta-D-ribosyl)imidazole-4-carboxamido]succinate + ADP + phosphate + 2 H(+). It participates in purine metabolism; IMP biosynthesis via de novo pathway; 5-amino-1-(5-phospho-D-ribosyl)imidazole-4-carboxamide from 5-amino-1-(5-phospho-D-ribosyl)imidazole-4-carboxylate: step 1/2. The chain is Phosphoribosylaminoimidazole-succinocarboxamide synthase 1 (purC1) from Mesorhizobium japonicum (strain LMG 29417 / CECT 9101 / MAFF 303099) (Mesorhizobium loti (strain MAFF 303099)).